The primary structure comprises 421 residues: Synaptotagmin-12 (421 aa).

Residues Met1–Gly18 lie on the Vesicular side of the membrane. A helical transmembrane segment spans residues Trp19 to Leu39. Over Trp40 to Asn421 the chain is Cytoplasmic. Ser97 is modified (phosphoserine; by PKA). A phosphoserine mark is found at Ser99 and Ser214. C2 domains follow at residues Thr152–Leu272 and Ala283–His416.

It belongs to the synaptotagmin family. Homodimer. Can also form heterodimers. Interacts with SYT1. In terms of processing, phosphorylation of Ser-97 is required for mossy-fiber long-term potentiation. Expressed in the brain, specifically in neurons of the cerebellum, cortex, hippocampus, olfactory bulb, brainstem and spinal cord (at protein level).

Its subcellular location is the cytoplasmic vesicle. It localises to the secretory vesicle. It is found in the synaptic vesicle membrane. Functionally, synaptic vesicle phosphoprotein that enhances spontaneous neurotransmitter release but does not effect induced neurotransmitter release. Unlike other synaptotagmins, it does not bind Ca(2+) or phospholipids. Essential for mossy-fiber long-term potentiation in the hippocampus. The chain is Synaptotagmin-12 from Rattus norvegicus (Rat).